We begin with the raw amino-acid sequence, 309 residues long: Homoserine O-acetyltransferase (309 aa).

Catalysis depends on Cys-142, which acts as the Acyl-thioester intermediate. Lys-163 and Ser-192 together coordinate substrate. His-235 (proton acceptor) is an active-site residue. Glu-237 is an active-site residue. Arg-249 contributes to the substrate binding site.

It belongs to the MetA family.

Its subcellular location is the cytoplasm. It carries out the reaction L-homoserine + acetyl-CoA = O-acetyl-L-homoserine + CoA. The protein operates within amino-acid biosynthesis; L-methionine biosynthesis via de novo pathway; O-acetyl-L-homoserine from L-homoserine: step 1/1. In terms of biological role, transfers an acetyl group from acetyl-CoA to L-homoserine, forming acetyl-L-homoserine. The protein is Homoserine O-acetyltransferase of Methanomethylophilus alvi (strain Mx1201).